The primary structure comprises 483 residues: Septin-8 (483 aa).

Positions 1–16 are enriched in basic and acidic residues; that stretch reads MAATDLERFSNAEPEP. The segment at 1–22 is disordered; the sequence is MAATDLERFSNAEPEPRSLSLG. The residue at position 2 (Ala-2) is an N-acetylalanine. Ser-10 carries the post-translational modification Phosphoserine. The 267-residue stretch at 41 to 307 folds into the Septin-type G domain; it reads QGFSFNILCV…ELYRRCKLEE (267 aa). Positions 51–58 are G1 motif; that stretch reads GETGIGKS. GTP contacts are provided by residues 51-58, Gly-106, 187-195, Gly-241, and Arg-256; these read GETGIGKS and KADTISKSE. The G3 motif stretch occupies residues 103-106; that stretch reads DAVG. Residues 186–189 are G4 motif; sequence AKAD. The stretch at 320 to 413 forms a coiled coil; that stretch reads FSLQETYEAK…AVEALQSQAL (94 aa). Over residues 411-420 the composition is skewed to polar residues; sequence QALHATSQQP. The segment at 411-443 is disordered; that stretch reads QALHATSQQPLRKDKDKKNRSDIGAHQPGMSLS. Residues 421-433 show a composition bias toward basic and acidic residues; the sequence is LRKDKDKKNRSDI.

This sequence belongs to the TRAFAC class TrmE-Era-EngA-EngB-Septin-like GTPase superfamily. Septin GTPase family. Septins polymerize into heterooligomeric protein complexes that form filaments, and can associate with cellular membranes, actin filaments and microtubules. GTPase activity is required for filament formation. Interacts with CDK14. Interacts with SEPTIN5. Interacts with SEPTIN7. Interacts with SEPTIN4. Interacts with VAMP2; the interaction inhibits interaction of VAMP2 with SYP. Interacts with STX1A. Widely expressed, including in brain, heart and platelets; most abundant in aorta. Isoform 2 is expressed at low levels in specific brain areas, such as occipital pole, frontal lobe, temporal lobe and putamen. Isoform 1 and 3 are highly expressed in specific brain areas, such as occipital pole, frontal lobe, temporal lobe and putamen. Isoform 2 is highly expressed in prostate, testis and ovary. Isoform 1 and isoform 3 are expressed at low levels in prostate, testis and ovary.

The protein localises to the cytoplasm. It localises to the cytoskeleton. It is found in the synapse. The protein resides in the cell projection. Its subcellular location is the axon. The protein localises to the cytoplasmic vesicle. It localises to the secretory vesicle. It is found in the synaptic vesicle membrane. The protein resides in the presynapse. Filament-forming cytoskeletal GTPase. May play a role in platelet secretion. Seems to participate in the process of SNARE complex formation in synaptic vesicles. Functionally, stabilizes BACE1 protein levels and promotes the sorting and accumulation of BACE1 to the recycling or endosomal compartments, modulating the beta-amyloidogenic processing of APP. This Homo sapiens (Human) protein is Septin-8.